The chain runs to 419 residues: Imidazolonepropionase (419 aa).

Residues His87 and His89 each contribute to the Fe(3+) site. The Zn(2+) site is built by His87 and His89. 4-imidazolone-5-propanoate contacts are provided by Arg96, Tyr159, and His192. Tyr159 is an N-formimidoyl-L-glutamate binding site. His257 provides a ligand contact to Fe(3+). His257 provides a ligand contact to Zn(2+). Gln260 serves as a coordination point for 4-imidazolone-5-propanoate. A Fe(3+)-binding site is contributed by Asp332. Residue Asp332 participates in Zn(2+) binding. Asn334 and Gly336 together coordinate N-formimidoyl-L-glutamate. Ser337 contacts 4-imidazolone-5-propanoate.

It belongs to the metallo-dependent hydrolases superfamily. HutI family. Requires Zn(2+) as cofactor. Fe(3+) serves as cofactor.

The protein localises to the cytoplasm. It catalyses the reaction 4-imidazolone-5-propanoate + H2O = N-formimidoyl-L-glutamate. It participates in amino-acid degradation; L-histidine degradation into L-glutamate; N-formimidoyl-L-glutamate from L-histidine: step 3/3. Functionally, catalyzes the hydrolytic cleavage of the carbon-nitrogen bond in imidazolone-5-propanoate to yield N-formimidoyl-L-glutamate. It is the third step in the universal histidine degradation pathway. The chain is Imidazolonepropionase from Alteromonas mediterranea (strain DSM 17117 / CIP 110805 / LMG 28347 / Deep ecotype).